The following is a 248-amino-acid chain: Tyrosine recombinase XerD-like (248 aa).

Positions 1 to 72 (MIAFIEPFLA…TVNQFLYYLY (72 aa)) constitute a Core-binding (CB) domain. One can recognise a Tyr recombinase domain in the interval 92 to 248 (SLKPQLTRLD…PITLEKYYKM (157 aa)). The active site involves Arg213. The active-site O-(3'-phospho-DNA)-tyrosine intermediate is the Tyr245.

Belongs to the 'phage' integrase family. XerD-like subfamily.

It localises to the cytoplasm. Its function is as follows. Putative tyrosine recombinase. Not involved in the cutting and rejoining of the recombining DNA molecules on dif(SL) site. The chain is Tyrosine recombinase XerD-like from Streptococcus equi subsp. zooepidemicus (strain MGCS10565).